A 341-amino-acid polypeptide reads, in one-letter code: Heat-inducible transcription repressor HrcA (341 aa).

This sequence belongs to the HrcA family.

Functionally, negative regulator of class I heat shock genes (grpE-dnaK-dnaJ and groELS operons). Prevents heat-shock induction of these operons. This Corynebacterium jeikeium (strain K411) protein is Heat-inducible transcription repressor HrcA.